Reading from the N-terminus, the 250-residue chain is Malonyl-[acyl-carrier protein] O-methyltransferase (250 aa).

It belongs to the methyltransferase superfamily.

It carries out the reaction malonyl-[ACP] + S-adenosyl-L-methionine = malonyl-[ACP] methyl ester + S-adenosyl-L-homocysteine. It functions in the pathway cofactor biosynthesis; biotin biosynthesis. Functionally, converts the free carboxyl group of a malonyl-thioester to its methyl ester by transfer of a methyl group from S-adenosyl-L-methionine (SAM). It allows to synthesize pimeloyl-ACP via the fatty acid synthetic pathway. The protein is Malonyl-[acyl-carrier protein] O-methyltransferase of Neorickettsia risticii (strain Illinois).